Consider the following 96-residue polypeptide: Large ribosomal subunit protein bL28 (96 aa).

A disordered region spans residues 1 to 22; that stretch reads MSRRCELTGKGPMTGNNVSHAN.

Belongs to the bacterial ribosomal protein bL28 family.

The polypeptide is Large ribosomal subunit protein bL28 (Ruegeria sp. (strain TM1040) (Silicibacter sp.)).